The following is a 722-amino-acid chain: BTB/POZ domain-containing protein 9 (722 aa).

The BTB domain maps to 46–112 (ADVEFIVEEE…IYSGTLLLST (67 aa)). The 97-residue stretch at 151–247 (CMILDAARLY…MNLEHLLQVV (97 aa)) folds into the BACK domain. Residues 565–593 (QDKNYLKKIADMEKEREKREKEKKTAKTD) are a coiled coil. Over residues 577-594 (EKEREKREKEKKTAKTDD) the composition is skewed to basic and acidic residues. Disordered stretches follow at residues 577–626 (EKER…VLRS) and 640–722 (PLTP…RETL). Residues 597 to 606 (IASTSGSSLA) are compositionally biased toward polar residues. Low complexity predominate over residues 607–626 (SGHAESPSTSSSSSQSVLRS). The span at 641–658 (LTPPALSPPGTPALPAPL) shows a compositional bias: pro residues. Residues 670-679 (EQNQPSNISA) show a composition bias toward polar residues. Positions 686 to 704 (SPSSRSNPSPSLSRSRSQS) are enriched in low complexity.

As to expression, detected in the brain (at protein level).

It localises to the cytoplasm. Functionally, essential for the homeostatic regulation of sleep and motor activity, by depressing hyperactivity and wakefulness. May function, at least in part, by ensuring dopamine biosynthesis. This chain is BTB/POZ domain-containing protein 9, found in Drosophila melanogaster (Fruit fly).